Consider the following 434-residue polypeptide: Gamma-glutamyl phosphate reductase (434 aa).

Belongs to the gamma-glutamyl phosphate reductase family.

The protein resides in the cytoplasm. It catalyses the reaction L-glutamate 5-semialdehyde + phosphate + NADP(+) = L-glutamyl 5-phosphate + NADPH + H(+). It participates in amino-acid biosynthesis; L-proline biosynthesis; L-glutamate 5-semialdehyde from L-glutamate: step 2/2. Functionally, catalyzes the NADPH-dependent reduction of L-glutamate 5-phosphate into L-glutamate 5-semialdehyde and phosphate. The product spontaneously undergoes cyclization to form 1-pyrroline-5-carboxylate. This chain is Gamma-glutamyl phosphate reductase, found in Pelotomaculum thermopropionicum (strain DSM 13744 / JCM 10971 / SI).